Consider the following 286-residue polypeptide: Transcription factor MafA (286 aa).

Residues S14 and S49 each carry the phosphoserine modification. Residues S51 to P85 show a composition bias toward low complexity. The interval S51 to G87 is disordered. A phosphothreonine mark is found at T53 and T57. Phosphoserine is present on residues S61 and S65. A Phosphothreonine modification is found at T113. The interval H126–R167 is disordered. A compositionally biased stretch (basic residues) spans A152–L166. The segment at R199 to R224 is basic motif. The bZIP domain occupies R199–L262. Positions L227–L248 are leucine-zipper. Positions R265–M286 are disordered. Position 272 is a phosphoserine (S272). Over residues P277–M286 the composition is skewed to low complexity.

This sequence belongs to the bZIP family. Maf subfamily. In terms of assembly, forms homodimers or heterodimers. May interact (via leucine-zipper domain) with MAFB. May interact with FOS and JUN. Interacts with PCAF; this interaction impairs MAFA ubiquitination.

Its subcellular location is the nucleus. Its function is as follows. Transcription factor involved in transcription regulation during lens development, including that of crystallin and filensin/BFSP1 genes. Binds to CRE-type MARE 5'-TGCTGACGTCAGCA-3' and TRE-type MARE 5'-TGCTGACTCAGCA-3' DNA sequences. The polypeptide is Transcription factor MafA (MAFA) (Gallus gallus (Chicken)).